A 147-amino-acid polypeptide reads, in one-letter code: Hemoglobin subunit beta-2 (147 aa).

The 145-residue stretch at 3 to 147 (HWTAEEKAAI…LVDGLSQGYN (145 aa)) folds into the Globin domain. The heme b site is built by His64 and His93.

Belongs to the globin family. Heterotetramer of two alpha chains and two beta chains. As to expression, red blood cells.

In terms of biological role, involved in oxygen transport from the lung to the various peripheral tissues. The sequence is that of Hemoglobin subunit beta-2 (hbb2) from Xenopus laevis (African clawed frog).